Consider the following 257-residue polypeptide: uncharacterized protein (257 aa).

The signal sequence occupies residues 1-22; it reads MGYLKRFALYISVMILIFAIAG. Cys23 carries N-palmitoyl cysteine lipidation. Residue Cys23 is the site of S-diacylglycerol cysteine attachment.

This sequence belongs to the staphylococcal tandem lipoprotein family.

It is found in the cell membrane. This is an uncharacterized protein from Staphylococcus aureus (strain USA300).